The sequence spans 93 residues: Large ribosomal subunit protein bL36m (93 aa).

Residues 1–35 (MFLQTLRLTMPRMFLHMKPSPITITRACTVPSLLS) constitute a mitochondrion transit peptide.

It belongs to the bacterial ribosomal protein bL36 family. Component of the mitochondrial large ribosomal subunit (mt-LSU). Mature yeast 74S mitochondrial ribosomes consist of a small (37S) and a large (54S) subunit. The 37S small subunit contains a 15S ribosomal RNA (15S mt-rRNA) and 34 different proteins. The 54S large subunit contains a 21S rRNA (21S mt-rRNA) and 46 different proteins. bL36m has a zinc binding site.

Its subcellular location is the mitochondrion. Its function is as follows. Component of the mitochondrial ribosome (mitoribosome), a dedicated translation machinery responsible for the synthesis of mitochondrial genome-encoded proteins, including at least some of the essential transmembrane subunits of the mitochondrial respiratory chain. The mitoribosomes are attached to the mitochondrial inner membrane and translation products are cotranslationally integrated into the membrane. bL36m may be involved in a process influencing telomere capping. This chain is Large ribosomal subunit protein bL36m (RTC6), found in Saccharomyces cerevisiae (strain ATCC 204508 / S288c) (Baker's yeast).